The sequence spans 574 residues: MYND-type zinc finger protein C31F10.10c (574 aa).

Disordered stretches follow at residues 207–253 (DSGD…QDPR) and 283–307 (MTTP…DEID). Polar residues-rich tracts occupy residues 243 to 253 (IYSNDSFQDPR) and 283 to 301 (MTTP…ASET). Residues 482–523 (NLLCNKWEEHSRQFAKCRRCRRTKYCSKECQHQAWPGHSRWC) form an MYND-type; degenerate zinc finger. Residues Cys-498, Cys-501, His-519, and Cys-523 each contribute to the Zn(2+) site. A disordered region spans residues 534-574 (KRESSKINSVTESESTASPAASVIPVGTESVTSSTQSDSRL). A compositionally biased stretch (low complexity) spans 542-556 (SVTESESTASPAASV). Residues 562–574 (ESVTSSTQSDSRL) show a composition bias toward polar residues.

This sequence belongs to the MUB1/samB family.

It is found in the nucleus. The protein resides in the cytoplasm. The protein localises to the cytoskeleton. It localises to the microtubule organizing center. Its subcellular location is the spindle pole body. The sequence is that of MYND-type zinc finger protein C31F10.10c from Schizosaccharomyces pombe (strain 972 / ATCC 24843) (Fission yeast).